The chain runs to 501 residues: Sugar phosphate exchanger 3 (501 aa).

The chain crosses the membrane as a helical span at residues 20–40 (CTHHHIVVFLLTFFSYSLLHA). N-linked (GlcNAc...) asparagine glycosylation occurs at Asn-62. 5 helical membrane passes run 87 to 107 (TLFL…GLFV), 119 to 139 (WVLS…GTLT), 153 to 173 (LWVV…AVMG), 183 to 203 (FVFG…AFLA), and 214 to 234 (AFLV…CGLL). N-linked (GlcNAc...) asparagine glycosylation occurs at Asn-273. 6 consecutive transmembrane segments (helical) span residues 298–320 (GVVL…FFWL), 340–360 (IWYD…SDVL), 364–384 (APVL…YSRS), 393–413 (VIMA…SSAI), 435–455 (GIVD…VSLI), and 459–479 (LGWM…ILFI).

This sequence belongs to the major facilitator superfamily. Organophosphate:Pi antiporter (OPA) (TC 2.A.1.4) family.

The protein localises to the endoplasmic reticulum membrane. The protein resides in the lysosome membrane. In terms of biological role, unlike the other SLC37 members, seems to lack glucose-6-phosphate antiporter activity. The chain is Sugar phosphate exchanger 3 (SLC37A3) from Gallus gallus (Chicken).